A 347-amino-acid polypeptide reads, in one-letter code: Autoinducer 2 import system permease protein LsrC (347 aa).

9 consecutive transmembrane segments (helical) span residues 14-34 (LLAI…YLSV), 39-59 (MVFS…MVML), 72-92 (GMCA…PVAC), 93-113 (LATL…VAWL), 115-135 (IPAI…MLLW), 155-175 (VFLG…LMAW), 213-233 (LNGG…GFIP), 249-269 (VLGG…ILGA), and 284-304 (IPAW…LVFD).

It belongs to the binding-protein-dependent transport system permease family. AraH/RbsC subfamily. As to quaternary structure, the complex is composed of two ATP-binding proteins (LsrA), two transmembrane proteins (LsrC and LsrD) and a solute-binding protein (LsrB).

It localises to the cell inner membrane. Functionally, part of the ABC transporter complex LsrABCD involved in autoinducer 2 (AI-2) import. Probably responsible for the translocation of the substrate across the membrane. The polypeptide is Autoinducer 2 import system permease protein LsrC (lsrC) (Salmonella choleraesuis (strain SC-B67)).